Consider the following 367-residue polypeptide: 2,6-dihydropseudooxynicotine hydrolase (367 aa).

Catalysis depends on residues E148, S217, D300, and H329.

Belongs to the AB hydrolase superfamily. In terms of assembly, homodimer.

It catalyses the reaction 2,6-dihydroxypseudooxynicotine + H2O = 2,6-dihydroxypyridine + 4-(methylamino)butanoate + H(+). It functions in the pathway alkaloid degradation; nicotine degradation; 2,6-dihydroxypyridine and 4-(methylamino)butanoate from 6-hydroxypseudooxynicotine: step 2/2. In terms of biological role, L-nicotine is used as a growth substrate. Plays a role in nicotine catabolism by cleaving a C-C bond in 2,6-dihydroxypseudooxynicotine. The sequence is that of 2,6-dihydropseudooxynicotine hydrolase from Paenarthrobacter nicotinovorans (Arthrobacter nicotinovorans).